Here is a 237-residue protein sequence, read N- to C-terminus: Flagellar L-ring protein (237 aa).

Residues 1 to 24 (MNRLSVPRFSVLIASLCGITLLSG) form the signal peptide. Cysteine 25 carries the N-palmitoyl cysteine lipid modification. Cysteine 25 is lipidated: S-diacylglycerol cysteine.

Belongs to the FlgH family. As to quaternary structure, the basal body constitutes a major portion of the flagellar organelle and consists of four rings (L,P,S, and M) mounted on a central rod.

It localises to the cell outer membrane. The protein resides in the bacterial flagellum basal body. Its function is as follows. Assembles around the rod to form the L-ring and probably protects the motor/basal body from shearing forces during rotation. This is Flagellar L-ring protein from Pseudomonas syringae pv. syringae (strain B728a).